We begin with the raw amino-acid sequence, 882 residues long: Alanine--tRNA ligase (882 aa).

4 residues coordinate Zn(2+): His563, His567, Cys665, and His669.

It belongs to the class-II aminoacyl-tRNA synthetase family. Zn(2+) is required as a cofactor.

It localises to the cytoplasm. It catalyses the reaction tRNA(Ala) + L-alanine + ATP = L-alanyl-tRNA(Ala) + AMP + diphosphate. Catalyzes the attachment of alanine to tRNA(Ala) in a two-step reaction: alanine is first activated by ATP to form Ala-AMP and then transferred to the acceptor end of tRNA(Ala). Also edits incorrectly charged Ser-tRNA(Ala) and Gly-tRNA(Ala) via its editing domain. This is Alanine--tRNA ligase from Synechococcus sp. (strain RCC307).